The primary structure comprises 129 residues: Glycine cleavage system H protein (129 aa).

The Lipoyl-binding domain occupies 24-106 (SYTVGITEHA…YGEGWFFRVM (83 aa)). N6-lipoyllysine is present on Lys-65.

Belongs to the GcvH family. As to quaternary structure, the glycine cleavage system is composed of four proteins: P, T, L and H. It depends on (R)-lipoate as a cofactor.

In terms of biological role, the glycine cleavage system catalyzes the degradation of glycine. The H protein shuttles the methylamine group of glycine from the P protein to the T protein. In Shewanella oneidensis (strain ATCC 700550 / JCM 31522 / CIP 106686 / LMG 19005 / NCIMB 14063 / MR-1), this protein is Glycine cleavage system H protein.